A 333-amino-acid chain; its full sequence is Ribonucleoside-diphosphate reductase small chain B (333 aa).

Aspartate 76, glutamate 107, and histidine 110 together coordinate Fe cation. Tyrosine 114 is an active-site residue. Glutamate 169, glutamate 203, and histidine 206 together coordinate Fe cation.

Belongs to the ribonucleoside diphosphate reductase small chain family. Heterodimer of a large and a small chain. It depends on Fe cation as a cofactor. Expressed in roots, rosette leaves, stems and flowers.

Its subcellular location is the cytoplasm. It catalyses the reaction a 2'-deoxyribonucleoside 5'-diphosphate + [thioredoxin]-disulfide + H2O = a ribonucleoside 5'-diphosphate + [thioredoxin]-dithiol. Functionally, provides the precursors necessary for DNA synthesis. Catalyzes the biosynthesis of deoxyribonucleotides from the corresponding ribonucleotides. This Arabidopsis thaliana (Mouse-ear cress) protein is Ribonucleoside-diphosphate reductase small chain B (RNR2B).